The chain runs to 468 residues: POC1 centriolar protein homolog B (468 aa).

WD repeat units follow at residues 16–55 (GHKDAVTCVDFSPDSKQLASSSADACVMIWNFKPQSRAYK), 58–97 (GHKEAVTCVQFSPSGHLVASSSKDRTVRLWAPNIKGESTV), 100–139 (AHTAVVRCVNFSSDGQTFITASDDKSIKAWNLHRQRFLFS), 142–181 (QHTNWVRCARFSPDGRLIASCSDDKTVRIWDLTNRLCINT), 184–223 (DYKGHSNYVDFNQMGTCVASAGADSTVKVWDIRMNKLLQH), 226–265 (VHNAGVSSLSFHPSGNYLLTASSDGTLKILDLLEGRLIYT), and 268–307 (GHQGPVLSVTFSKSGDQFASGATDAQVLVWKTNFDKYSVK). A coiled-coil region spans residues 420–459 (NTLEQIVDQLNVLTQTVSILEHRLTLTEDKLKECLENQQK).

Belongs to the WD repeat POC1 family. Interacts with pat. Highly expressed in ovary and, at low levels, in testis.

Its subcellular location is the cytoplasm. It localises to the cytoskeleton. The protein localises to the microtubule organizing center. The protein resides in the centrosome. It is found in the centriole. Functionally, plays an important role in centriole assembly and/or stability and ciliogenesis. Involved in early steps of centriole duplication, as well as in the later steps of centriole length control. This Xenopus laevis (African clawed frog) protein is POC1 centriolar protein homolog B (poc1b).